A 271-amino-acid chain; its full sequence is Ribosomal RNA small subunit methyltransferase A (271 aa).

Positions 28, 30, 54, 75, 99, and 117 each coordinate S-adenosyl-L-methionine.

Belongs to the class I-like SAM-binding methyltransferase superfamily. rRNA adenine N(6)-methyltransferase family. RsmA subfamily.

It localises to the cytoplasm. The enzyme catalyses adenosine(1518)/adenosine(1519) in 16S rRNA + 4 S-adenosyl-L-methionine = N(6)-dimethyladenosine(1518)/N(6)-dimethyladenosine(1519) in 16S rRNA + 4 S-adenosyl-L-homocysteine + 4 H(+). In terms of biological role, specifically dimethylates two adjacent adenosines (A1518 and A1519) in the loop of a conserved hairpin near the 3'-end of 16S rRNA in the 30S particle. May play a critical role in biogenesis of 30S subunits. The chain is Ribosomal RNA small subunit methyltransferase A from Thermus thermophilus (strain ATCC 27634 / DSM 579 / HB8).